A 1070-amino-acid chain; its full sequence is DNA-directed RNA polymerase subunit beta (1070 aa).

Belongs to the RNA polymerase beta chain family. In terms of assembly, in plastids the minimal PEP RNA polymerase catalytic core is composed of four subunits: alpha, beta, beta', and beta''. When a (nuclear-encoded) sigma factor is associated with the core the holoenzyme is formed, which can initiate transcription.

It is found in the plastid. The protein resides in the chloroplast. It catalyses the reaction RNA(n) + a ribonucleoside 5'-triphosphate = RNA(n+1) + diphosphate. DNA-dependent RNA polymerase catalyzes the transcription of DNA into RNA using the four ribonucleoside triphosphates as substrates. The polypeptide is DNA-directed RNA polymerase subunit beta (Nicotiana sylvestris (Wood tobacco)).